Consider the following 175-residue polypeptide: B9 domain-containing protein 2 (175 aa).

One can recognise a C2 B9-type domain in the interval 2-118; that stretch reads AEVHVIGQII…DCPTWRPLGS (117 aa).

The protein belongs to the B9D family. As to quaternary structure, part of the tectonic-like complex (also named B9 complex). Interacts with TUBG1. In terms of tissue distribution, highest expression in thymus and skeletal muscle. Also expressed in spleen, kidney, lung, heart, microglia and liver. Detected in brain (at protein level).

The protein localises to the cytoplasm. It localises to the cytoskeleton. It is found in the cilium basal body. Its subcellular location is the cilium axoneme. The protein resides in the nucleus. Functionally, component of the tectonic-like complex, a complex localized at the transition zone of primary cilia and acting as a barrier that prevents diffusion of transmembrane proteins between the cilia and plasma membranes. The sequence is that of B9 domain-containing protein 2 (B9d2) from Mus musculus (Mouse).